We begin with the raw amino-acid sequence, 806 residues long: DNA topoisomerase 4 subunit A (806 aa).

A Topo IIA-type catalytic domain is found at 33-499 (LPDARDGLKP…EEIKINLEVM (467 aa)). Residue Tyr-121 is the O-(5'-phospho-DNA)-tyrosine intermediate of the active site.

Belongs to the type II topoisomerase GyrA/ParC subunit family. ParC type 2 subfamily. As to quaternary structure, heterotetramer composed of ParC and ParE.

It is found in the cell membrane. The protein localises to the cytoplasm. It carries out the reaction ATP-dependent breakage, passage and rejoining of double-stranded DNA.. In terms of biological role, topoisomerase IV is essential for chromosome segregation. It relaxes supercoiled DNA. Performs the decatenation events required during the replication of a circular DNA molecule. This chain is DNA topoisomerase 4 subunit A, found in Bacillus subtilis (strain 168).